Here is a 130-residue protein sequence, read N- to C-terminus: Small ribosomal subunit protein uS11 (130 aa).

Belongs to the universal ribosomal protein uS11 family. As to quaternary structure, part of the 30S ribosomal subunit. Interacts with proteins S7 and S18. Binds to IF-3.

Its function is as follows. Located on the platform of the 30S subunit, it bridges several disparate RNA helices of the 16S rRNA. Forms part of the Shine-Dalgarno cleft in the 70S ribosome. The sequence is that of Small ribosomal subunit protein uS11 from Pseudoalteromonas atlantica (strain T6c / ATCC BAA-1087).